The sequence spans 82 residues: ATP synthase subunit c, chloroplastic (82 aa).

2 consecutive transmembrane segments (helical) span residues 4 to 24 and 57 to 77; these read IISA…AIGP and LAFM…LLFA.

The protein belongs to the ATPase C chain family. F-type ATPases have 2 components, F(1) - the catalytic core - and F(0) - the membrane proton channel. F(1) has five subunits: alpha(3), beta(3), gamma(1), delta(1), epsilon(1). F(0) has four main subunits: a(1), b(1), b'(1) and c(10-14). The alpha and beta chains form an alternating ring which encloses part of the gamma chain. F(1) is attached to F(0) by a central stalk formed by the gamma and epsilon chains, while a peripheral stalk is formed by the delta, b and b' chains.

Its subcellular location is the plastid. The protein resides in the chloroplast thylakoid membrane. Its function is as follows. F(1)F(0) ATP synthase produces ATP from ADP in the presence of a proton or sodium gradient. F-type ATPases consist of two structural domains, F(1) containing the extramembraneous catalytic core and F(0) containing the membrane proton channel, linked together by a central stalk and a peripheral stalk. During catalysis, ATP synthesis in the catalytic domain of F(1) is coupled via a rotary mechanism of the central stalk subunits to proton translocation. Key component of the F(0) channel; it plays a direct role in translocation across the membrane. A homomeric c-ring of between 10-14 subunits forms the central stalk rotor element with the F(1) delta and epsilon subunits. The chain is ATP synthase subunit c, chloroplastic from Heterosigma akashiwo (strain NIES-293 / 8280G21-1).